The following is a 190-amino-acid chain: Secreted isochorismatase effector Isc1 (190 aa).

Residues Asp26, Lys100, and Cys133 contribute to the active site.

The protein belongs to the isochorismatase family.

It is found in the secreted. The protein resides in the host cytoplasm. It localises to the host nucleus. It catalyses the reaction isochorismate + H2O = (2S,3S)-2,3-dihydroxy-2,3-dihydrobenzoate + pyruvate. Its function is as follows. Secreted isochorismatase required for full virulence of V.dahliae. Suppresses salicylate-mediated innate immunity of the host by disrupting the plant salicylate metabolism pathway via hydrolysis of its isochorismate precursor. The chain is Secreted isochorismatase effector Isc1 from Verticillium dahliae (strain VdLs.17 / ATCC MYA-4575 / FGSC 10137) (Verticillium wilt).